The following is a 509-amino-acid chain: Probable aspartic-type endopeptidase CTSD (509 aa).

Residues 1–21 (MQFLWLCLLSAVTLQFTGTLA) form the signal peptide. Residues 102-408 (YFSEVKVGSE…DFDKNRVGLA (307 aa)) form the Peptidase A1 domain. Aspartate 120 is a catalytic residue. Asparagine 174 carries an N-linked (GlcNAc...) asparagine glycan. Aspartate 302 is a catalytic residue. A glycan (N-linked (GlcNAc...) asparagine) is linked at asparagine 361. The segment at 451–489 (NKAPSGGSPGLPAESGSDSTTNGEATNGATSSPNSSSSV) is disordered. The span at 466-480 (GSDSTTNGEATNGAT) shows a compositional bias: polar residues. A glycan (N-linked (GlcNAc...) asparagine) is linked at asparagine 484. The GPI-anchor amidated serine moiety is linked to residue serine 485. The propeptide at 486 to 509 (SSSVLTPTWLTLAVFFAIGSSLWS) is removed in mature form.

The protein belongs to the peptidase A1 family.

It localises to the cell membrane. Probable GPI-anchored aspartic-type endopeptidase which contributes to virulence. This is Probable aspartic-type endopeptidase CTSD (CTSD) from Arthroderma benhamiae (strain ATCC MYA-4681 / CBS 112371) (Trichophyton mentagrophytes).